Consider the following 278-residue polypeptide: DNA-directed RNA polymerase subunit alpha (278 aa).

This sequence belongs to the RNA polymerase alpha chain family. In plastids the minimal PEP RNA polymerase catalytic core is composed of four subunits: alpha, beta, beta', and beta''. When a (nuclear-encoded) sigma factor is associated with the core the holoenzyme is formed, which can initiate transcription.

It localises to the plastid. The protein localises to the chloroplast. It catalyses the reaction RNA(n) + a ribonucleoside 5'-triphosphate = RNA(n+1) + diphosphate. Functionally, DNA-dependent RNA polymerase catalyzes the transcription of DNA into RNA using the four ribonucleoside triphosphates as substrates. The protein is DNA-directed RNA polymerase subunit alpha (rpoA) of Chlorella vulgaris (Green alga).